The sequence spans 347 residues: Protein RecA (347 aa).

ATP is bound at residue 68–75 (GPESSGKT).

Belongs to the RecA family.

It is found in the cytoplasm. Its function is as follows. Can catalyze the hydrolysis of ATP in the presence of single-stranded DNA, the ATP-dependent uptake of single-stranded DNA by duplex DNA, and the ATP-dependent hybridization of homologous single-stranded DNAs. It interacts with LexA causing its activation and leading to its autocatalytic cleavage. This is Protein RecA from Mycobacterium sp. (strain JLS).